Reading from the N-terminus, the 267-residue chain is Very long chain fatty acid elongase 6 (267 aa).

N-linked (GlcNAc...) asparagine glycosylation occurs at Asn2. 7 helical membrane-spanning segments follow: residues 34–51 (FLFSALYAAFIFGGRHLM), 70–90 (LAVFSIFGALRTGAYMLYILM), 111–131 (FWAYAFVLSKAPELGDTIFII), 136–156 (KLIFLHWYHHITVLLYSWYSY), 159–179 (MVAGGGWFMTMNYGVHAVMYS), 197–217 (FITLSQITQMLMGCVINYLVF), and 234–254 (IFWSSLMYLSYLVLFCHFFFE).

This sequence belongs to the ELO family. ELOVL6 subfamily. Post-translationally, N-Glycosylated. Highly expressed in adrenal gland, liver, white adipose tissue (WAT), adult and fetal brain, cerebellum, spinal cord, testis, skin and peripheral nerve; where lipogenesis and steroidogenesis are active. Weakly expressed in kidney, heart, skeletal muscle, lung, and spleen.

It is found in the endoplasmic reticulum membrane. The catalysed reaction is a very-long-chain acyl-CoA + malonyl-CoA + H(+) = a very-long-chain 3-oxoacyl-CoA + CO2 + CoA. It catalyses the reaction hexadecanoyl-CoA + malonyl-CoA + H(+) = 3-oxooctadecanoyl-CoA + CO2 + CoA. It carries out the reaction (9Z)-hexadecenoyl-CoA + malonyl-CoA + H(+) = 3-oxo-(11Z)-octadecenoyl-CoA + CO2 + CoA. The enzyme catalyses dodecanoyl-CoA + malonyl-CoA + H(+) = 3-oxotetradecanoyl-CoA + CO2 + CoA. The catalysed reaction is tetradecanoyl-CoA + malonyl-CoA + H(+) = 3-oxohexadecanoyl-CoA + CO2 + CoA. It catalyses the reaction (9Z)-octadecenoyl-CoA + malonyl-CoA + H(+) = 3-oxo-(11Z)-eicosenoyl-CoA + CO2 + CoA. It carries out the reaction (9Z,12Z)-octadecadienoyl-CoA + malonyl-CoA + H(+) = (11Z,14Z)-3-oxoicosa-11,14-dienoyl-CoA + CO2 + CoA. The enzyme catalyses (9Z,12Z,15Z)-octadecatrienoyl-CoA + malonyl-CoA + H(+) = (11Z,14Z,17Z)-3-oxoeicosatrienoyl-CoA + CO2 + CoA. The protein operates within lipid metabolism; fatty acid biosynthesis. The reaction is stimulated by the presence of HSD17B12, the enzyme catalyzing the second step of the elongation cycle. In terms of biological role, catalyzes the first and rate-limiting reaction of the four reactions that constitute the long-chain fatty acids elongation cycle. This endoplasmic reticulum-bound enzymatic process allows the addition of 2 carbons to the chain of long- and very long-chain fatty acids (VLCFAs) per cycle. Condensing enzyme that elongates fatty acids with 12, 14 and 16 carbons with higher activity toward C16:0 acyl-CoAs. Catalyzes the synthesis of unsaturated C16 long chain fatty acids and, to a lesser extent, C18:0 and those with low desaturation degree. May participate in the production of saturated and monounsaturated VLCFAs of different chain lengths that are involved in multiple biological processes as precursors of membrane lipids and lipid mediators. This Mus musculus (Mouse) protein is Very long chain fatty acid elongase 6.